The following is a 185-amino-acid chain: Protein E3 homolog (185 aa).

Residues 7 to 73 enclose the Z-binding domain; it reads TVNDAEIFSL…SNPPKWFKNY (67 aa). Residues 112-179 enclose the DRBM domain; sequence NPCIVLNEYC…SKITMDEILD (68 aa).

Belongs to the poxviridae E3 protein family.

RNA-binding protein that plays a role in the inhibition of multiple cellular antiviral responses activated by double-stranded RNA (dsRNA), such as inhibition of PKR activation, necroptosis, and IFN-mediated antiviral activities. Recognizes and binds Z-RNA structures via its Z-binding domain and dsRNA via its DRBM domain: RNA-binding activity is required to escape host ZBP1-dependent necroptosis. Mechanistically, the Z-binding domain binds Z-RNAs that are produced during Yaba-like disease virus infection, thereby competing with Z-RNA detection by host ZBP1, suppressing ZBP1-dependent necroptosis. This is Protein E3 homolog from Yaba-like disease virus (YLDV).